A 559-amino-acid polypeptide reads, in one-letter code: Spermidine/putrescine import ATP-binding protein PotA (559 aa).

In terms of domain architecture, ABC transporter spans Ile-7–Ile-448. Gly-40–Thr-47 provides a ligand contact to ATP. The interval Trp-108–Arg-317 is insert.

Belongs to the ABC transporter superfamily. Spermidine/putrescine importer (TC 3.A.1.11.1) family. As to quaternary structure, the complex is composed of two ATP-binding proteins (PotA), two transmembrane proteins (PotB and PotC) and a solute-binding protein (PotD).

It localises to the cell membrane. The enzyme catalyses ATP + H2O + polyamine-[polyamine-binding protein]Side 1 = ADP + phosphate + polyamineSide 2 + [polyamine-binding protein]Side 1.. Functionally, part of the ABC transporter complex PotABCD involved in spermidine/putrescine import. Responsible for energy coupling to the transport system. This is Spermidine/putrescine import ATP-binding protein PotA from Mycoplasma genitalium (strain ATCC 33530 / DSM 19775 / NCTC 10195 / G37) (Mycoplasmoides genitalium).